The chain runs to 355 residues: MAEITAQLVKQLREMTDAGMMDCKKALVETDGDIEKAVEYLREKGLSKAAKKADRVASEGVVSVEVASDFSKASLLEINSETDFVAKNEQFKELVAKTSKLVHDHALSSTETLHTVSVDGMEFSEYLQQNIAKIGENIVVRRIVTLETKRGAIVNGYVHSNGRVGVLIGIKFGKEGSKSACVELARNLCMHAAAMKPQVLSYEELDPEFITKEKVALIAELEKENEELKRLGKPLHRIPEYISRSELTPSVLKNQEQKLREELKAQGKPEAIWDKIVPGQLERFIADSTLIDQRLTLLGQFYVMDDKKTIAQVLEAKGKELDDSIEIVDYVRFELGEGIEKKACNFAEEVAAQLG.

Residues threonine 82–valine 85 form an involved in Mg(2+) ion dislocation from EF-Tu region.

It belongs to the EF-Ts family.

Its subcellular location is the cytoplasm. Its function is as follows. Associates with the EF-Tu.GDP complex and induces the exchange of GDP to GTP. It remains bound to the aminoacyl-tRNA.EF-Tu.GTP complex up to the GTP hydrolysis stage on the ribosome. The polypeptide is Elongation factor Ts (Wolinella succinogenes (strain ATCC 29543 / DSM 1740 / CCUG 13145 / JCM 31913 / LMG 7466 / NCTC 11488 / FDC 602W) (Vibrio succinogenes)).